A 235-amino-acid polypeptide reads, in one-letter code: NAD(P)H-quinone oxidoreductase subunit K, chloroplastic (235 aa).

[4Fe-4S] cluster-binding residues include cysteine 43, cysteine 44, cysteine 108, and cysteine 139.

Belongs to the complex I 20 kDa subunit family. As to quaternary structure, NDH is composed of at least 16 different subunits, 5 of which are encoded in the nucleus. Requires [4Fe-4S] cluster as cofactor.

The protein localises to the plastid. It localises to the chloroplast thylakoid membrane. The catalysed reaction is a plastoquinone + NADH + (n+1) H(+)(in) = a plastoquinol + NAD(+) + n H(+)(out). The enzyme catalyses a plastoquinone + NADPH + (n+1) H(+)(in) = a plastoquinol + NADP(+) + n H(+)(out). NDH shuttles electrons from NAD(P)H:plastoquinone, via FMN and iron-sulfur (Fe-S) centers, to quinones in the photosynthetic chain and possibly in a chloroplast respiratory chain. The immediate electron acceptor for the enzyme in this species is believed to be plastoquinone. Couples the redox reaction to proton translocation, and thus conserves the redox energy in a proton gradient. The polypeptide is NAD(P)H-quinone oxidoreductase subunit K, chloroplastic (Ipomoea purpurea (Common morning glory)).